The primary structure comprises 978 residues: NACHT, LRR and PYD domains-containing protein 4E (978 aa).

A Pyrin domain is found at 1–93 (MASFFSDFGL…MERAGREIAG (93 aa)). An NACHT domain is found at 148–471 (HMVFLQGVAG…FHLLKSHVDH (324 aa)). 154–161 (GVAGIGKS) contributes to the ATP binding site. 6 LRR repeats span residues 594–617 (CSTLKKLSLSTQNILSEGQEHSYT), 694–717 (LLNLSLTFLSHNDVKLLCDVLNQA), 746–773 (SKMLKHLNLSSNNLDKGISSLSKALCHP), 802–825 (NKTLTHLDISFNDLKDEGLKVLCG), 859–882 (NQNLRNLQISNNKIEDAGVKLLCD), and 916–940 (CKTLLGINLQENALDHSGLVALFEA).

Belongs to the NLRP family.

Functionally, may be involved in inflammation and recognition of cytosolic pathogen-associated molecular patterns (PAMPs) not intercepted by membrane-bound receptors. This is NACHT, LRR and PYD domains-containing protein 4E (Nlrp4e) from Mus musculus (Mouse).